A 298-amino-acid chain; its full sequence is Acetylglutamate kinase (298 aa).

Residues 69-70 (GG), R91, and N191 contribute to the substrate site.

The protein belongs to the acetylglutamate kinase family. ArgB subfamily.

It is found in the cytoplasm. The enzyme catalyses N-acetyl-L-glutamate + ATP = N-acetyl-L-glutamyl 5-phosphate + ADP. The protein operates within amino-acid biosynthesis; L-arginine biosynthesis; N(2)-acetyl-L-ornithine from L-glutamate: step 2/4. Functionally, catalyzes the ATP-dependent phosphorylation of N-acetyl-L-glutamate. In Neisseria gonorrhoeae (strain ATCC 700825 / FA 1090), this protein is Acetylglutamate kinase.